The primary structure comprises 561 residues: Arf-GAP domain and FG repeat-containing protein 1 (561 aa).

Residues Glu11–Val135 form the Arf-GAP domain. The segment at Cys29–Cys52 adopts a C4-type zinc-finger fold. Residue Ser167 is modified to Phosphoserine. The tract at residues Leu171–Glu193 is disordered. The segment covering Gly176–Gln191 has biased composition (polar residues). Thr177 carries the phosphothreonine modification. A phosphoserine mark is found at Ser181 and Ser362. Residue Ser367 is glycosylated (O-linked (GlcNAc) serine). Positions Pro409–Gln451 are disordered. Polar residues predominate over residues Ser442–Gln451.

In terms of assembly, interacts with EPS15R and EPS15. Interacts with FCHO1. In terms of processing, O-glycosylated.

The protein resides in the nucleus. It localises to the cytoplasmic vesicle. Required for vesicle docking or fusion during acrosome biogenesis. May play a role in RNA trafficking or localization. This Rattus norvegicus (Rat) protein is Arf-GAP domain and FG repeat-containing protein 1 (Agfg1).